Consider the following 212-residue polypeptide: Probable octanoyltransferase (212 aa).

A BPL/LPL catalytic domain is found at 28–199 (GVSEEMILVT…NLETLLQRQE (172 aa)). Residues 66–73 (RGGDATYH), 130–132 (SVG), and 143–145 (GVA) each bind substrate. The active-site Acyl-thioester intermediate is the Cys161.

This sequence belongs to the LipB family.

Its subcellular location is the cytoplasm. It carries out the reaction octanoyl-[ACP] + L-lysyl-[protein] = N(6)-octanoyl-L-lysyl-[protein] + holo-[ACP] + H(+). Its pathway is protein modification; protein lipoylation via endogenous pathway; protein N(6)-(lipoyl)lysine from octanoyl-[acyl-carrier-protein]: step 1/2. Functionally, catalyzes the transfer of endogenously produced octanoic acid from octanoyl-acyl-carrier-protein onto the lipoyl domains of lipoate-dependent enzymes. Lipoyl-ACP can also act as a substrate although octanoyl-ACP is likely to be the physiological substrate. The chain is Probable octanoyltransferase from Pyrobaculum arsenaticum (strain DSM 13514 / JCM 11321 / PZ6).